A 151-amino-acid chain; its full sequence is Probable cGMP 3',5'-cyclic phosphodiesterase subunit delta (151 aa).

Belongs to the PDE6D/unc-119 family. Interacts with Pde6.

It is found in the nucleus. The protein resides in the cytoplasm. This is Probable cGMP 3',5'-cyclic phosphodiesterase subunit delta from Aedes aegypti (Yellowfever mosquito).